Consider the following 231-residue polypeptide: Ribonuclease 3 (231 aa).

The region spanning 7-135 (IQAIESKLNF…ILGAVYLDGG (129 aa)) is the RNase III domain. E48 lines the Mg(2+) pocket. Residue D52 is part of the active site. Positions 121 and 124 each coordinate Mg(2+). E124 is an active-site residue. The DRBM domain maps to 160-229 (NPKNRLQQFT…AKQALSTHDN (70 aa)).

Belongs to the ribonuclease III family. As to quaternary structure, homodimer. It depends on Mg(2+) as a cofactor.

The protein resides in the cytoplasm. It catalyses the reaction Endonucleolytic cleavage to 5'-phosphomonoester.. Functionally, digests double-stranded RNA. Involved in the processing of primary rRNA transcript to yield the immediate precursors to the large and small rRNAs (23S and 16S). Processes some mRNAs, and tRNAs when they are encoded in the rRNA operon. Processes pre-crRNA and tracrRNA of type II CRISPR loci if present in the organism. This Chlamydia trachomatis serovar A (strain ATCC VR-571B / DSM 19440 / HAR-13) protein is Ribonuclease 3.